Here is a 464-residue protein sequence, read N- to C-terminus: Siroheme synthase (464 aa).

The segment at 1–203 is precorrin-2 dehydrogenase /sirohydrochlorin ferrochelatase; it reads MKYLPLFHNL…GQGAEAERLL (203 aa). Residues 22–23 and 43–44 contribute to the NAD(+) site; these read EI and PE. Serine 128 is modified (phosphoserine). Residues 216-464 form a uroporphyrinogen-III C-methyltransferase region; the sequence is GEVYLVGAGP…AWFEGAQGQI (249 aa). Proline 225 lines the S-adenosyl-L-methionine pocket. The active-site Proton acceptor is the aspartate 248. Catalysis depends on lysine 270, which acts as the Proton donor. S-adenosyl-L-methionine contacts are provided by residues 301 to 303, isoleucine 306, 331 to 332, methionine 383, and glycine 412; these read GGD and TA.

It in the N-terminal section; belongs to the precorrin-2 dehydrogenase / sirohydrochlorin ferrochelatase family. This sequence in the C-terminal section; belongs to the precorrin methyltransferase family.

It catalyses the reaction uroporphyrinogen III + 2 S-adenosyl-L-methionine = precorrin-2 + 2 S-adenosyl-L-homocysteine + H(+). The enzyme catalyses precorrin-2 + NAD(+) = sirohydrochlorin + NADH + 2 H(+). The catalysed reaction is siroheme + 2 H(+) = sirohydrochlorin + Fe(2+). It participates in cofactor biosynthesis; adenosylcobalamin biosynthesis; precorrin-2 from uroporphyrinogen III: step 1/1. The protein operates within cofactor biosynthesis; adenosylcobalamin biosynthesis; sirohydrochlorin from precorrin-2: step 1/1. Its pathway is porphyrin-containing compound metabolism; siroheme biosynthesis; precorrin-2 from uroporphyrinogen III: step 1/1. It functions in the pathway porphyrin-containing compound metabolism; siroheme biosynthesis; siroheme from sirohydrochlorin: step 1/1. It participates in porphyrin-containing compound metabolism; siroheme biosynthesis; sirohydrochlorin from precorrin-2: step 1/1. Its function is as follows. Multifunctional enzyme that catalyzes the SAM-dependent methylations of uroporphyrinogen III at position C-2 and C-7 to form precorrin-2 via precorrin-1. Then it catalyzes the NAD-dependent ring dehydrogenation of precorrin-2 to yield sirohydrochlorin. Finally, it catalyzes the ferrochelation of sirohydrochlorin to yield siroheme. The chain is Siroheme synthase from Pseudomonas fluorescens (strain Pf0-1).